Here is a 300-residue protein sequence, read N- to C-terminus: Histone deacetylase HDT3 (300 aa).

Over residues glutamate 98–leucine 112 the composition is skewed to acidic residues. The interval glutamate 98–lysine 300 is disordered. The span at glutamate 119–glutamate 132 shows a compositional bias: basic and acidic residues. A compositionally biased stretch (acidic residues) spans aspartate 151–threonine 197. The span at proline 198–alanine 211 shows a compositional bias: basic and acidic residues. Low complexity predominate over residues serine 265–proline 275. The C2H2-type zinc-finger motif lies at valine 274 to histidine 297. A compositionally biased stretch (polar residues) spans cysteine 279–glutamine 290.

The protein belongs to the histone deacetylase HD2 family. In terms of assembly, multimer. Possibly forms a homotrimer with HDT1 and/or HDT2.

It is found in the nucleus. Its subcellular location is the nucleolus. Its function is as follows. Mediates the deacetylation of lysine residues on the N-terminal part of the core histones (H2A, H2B, H3 and H4). Histone deacetylation gives a tag for epigenetic repression and plays an important role in transcriptional regulation, cell cycle progression and developmental events. This Zea mays (Maize) protein is Histone deacetylase HDT3 (HDT3).